The sequence spans 464 residues: tRNA-2-methylthio-N(6)-dimethylallyladenosine synthase (464 aa).

The 117-residue stretch at 19-135 folds into the MTTase N-terminal domain; the sequence is GSYWITTFGC…LENLLGKVDL (117 aa). [4Fe-4S] cluster-binding residues include C28, C64, C98, C170, C174, and C177. A Radical SAM core domain is found at 156–394; the sequence is RESSICGWVN…DLVEKTARSR (239 aa). Residues 396–464 form the TRAM domain; sequence KRYINNIESV…PFSLTGELYL (69 aa).

Belongs to the methylthiotransferase family. MiaB subfamily. Monomer. Requires [4Fe-4S] cluster as cofactor.

The protein localises to the cytoplasm. It carries out the reaction N(6)-dimethylallyladenosine(37) in tRNA + (sulfur carrier)-SH + AH2 + 2 S-adenosyl-L-methionine = 2-methylsulfanyl-N(6)-dimethylallyladenosine(37) in tRNA + (sulfur carrier)-H + 5'-deoxyadenosine + L-methionine + A + S-adenosyl-L-homocysteine + 2 H(+). In terms of biological role, catalyzes the methylthiolation of N6-(dimethylallyl)adenosine (i(6)A), leading to the formation of 2-methylthio-N6-(dimethylallyl)adenosine (ms(2)i(6)A) at position 37 in tRNAs that read codons beginning with uridine. This Prochlorococcus marinus (strain AS9601) protein is tRNA-2-methylthio-N(6)-dimethylallyladenosine synthase.